A 2534-amino-acid chain; its full sequence is Highly reducing polyketide synthase easB (2534 aa).

The disordered stretch occupies residues 1–49 (MSPASRSRVEIADSESDSERLSSSPWSILSDNDSNTSDERSTRAGPGSL). The Ketosynthase family 3 (KS3) domain occupies 49-470 (LEPIAVIGIG…GTNAHVIIDA (422 aa)). Catalysis depends on for beta-ketoacyl synthase activity residues Cys-222, His-356, and His-396. Residues 587–885 (IFSGQGAQYA…LSGPVNQILK (299 aa)) are malonyl-CoA:ACP transacylase (MAT) domain. The tract at residues 973 to 1111 (HELLGTLSAD…GLVQAEVDSV (139 aa)) is N-terminal hotdog fold. A dehydratase (DH) domain region spans residues 973 to 1273 (HELLGTLSAD…QGIRVTSLGG (301 aa)). The region spanning 973 to 1277 (HELLGTLSAD…VTSLGGDVAA (305 aa)) is the PKS/mFAS DH domain. His-1005 serves as the catalytic Proton acceptor; for dehydratase activity. The C-terminal hotdog fold stretch occupies residues 1131 to 1277 (THGTIPQKFY…VTSLGGDVAA (147 aa)). The active-site Proton donor; for dehydratase activity is the Asp-1193. Residues 1395-1625 (KTSALSLLTK…VFISTAPFPR (231 aa)) form a methyltransferase (CMet) domain region. The segment at 1834–2146 (GLLETIRWKD…AGKHTGKIVL (313 aa)) is enoyl reductase (ER) domain. The 78-residue stretch at 2452–2529 (EAVHIVTNAI…QLAAIVAKES (78 aa)) folds into the Carrier domain. A ketoreductase (KR) domain region spans residues 2453–2526 (AVHIVTNAIL…SISQLAAIVA (74 aa)). Ser-2489 carries the post-translational modification O-(pantetheine 4'-phosphoryl)serine.

It functions in the pathway antibiotic biosynthesis. Its function is as follows. Polyketide synthase; part of the gene cluster that mediates the biosynthesis of emericellamides, secondary metabolites acting as antibiotics. The biosynthesis of emericellamides initiates from the highly reducing polyketide synthase easB which catalyzes the formation of the linear polyketide chain. EasB produces several polyketides that can be further processed by the downstream enzymes. The polyketides are released from easB as linear polyketide carboxylic acids, which are converted to CoA thioesters by the acyl-CoA ligase easD. The substrates are then loaded onto the acyltransferase easC, which shuttles them to the first thiolation (T) domain of the nonribosomal peptide synthetase easA. EasA then performs condensation of the polyketides with one glycine, two alanine, one valine and one leucine residues. A last step of cyclization leads to the production of emericellamides. The protein is Highly reducing polyketide synthase easB of Emericella nidulans (strain FGSC A4 / ATCC 38163 / CBS 112.46 / NRRL 194 / M139) (Aspergillus nidulans).